We begin with the raw amino-acid sequence, 56 residues long: Large ribosomal subunit protein bL33A (56 aa).

Belongs to the bacterial ribosomal protein bL33 family.

The chain is Large ribosomal subunit protein bL33A from Cutibacterium acnes (strain DSM 16379 / KPA171202) (Propionibacterium acnes).